The following is a 34-amino-acid chain: METNDLGFVATLLFVLVPAIFLIILYIQTNSREG.

The chain crosses the membrane as a helical span at residues 7-27 (GFVATLLFVLVPAIFLIILYI).

It belongs to the PsbM family. PSII is composed of 1 copy each of membrane proteins PsbA, PsbB, PsbC, PsbD, PsbE, PsbF, PsbH, PsbI, PsbJ, PsbK, PsbL, PsbM, PsbT, PsbX, PsbY, PsbZ, Psb30/Ycf12, peripheral proteins PsbO, CyanoQ (PsbQ), PsbU, PsbV and a large number of cofactors. It forms dimeric complexes.

It is found in the cellular thylakoid membrane. One of the components of the core complex of photosystem II (PSII). PSII is a light-driven water:plastoquinone oxidoreductase that uses light energy to abstract electrons from H(2)O, generating O(2) and a proton gradient subsequently used for ATP formation. It consists of a core antenna complex that captures photons, and an electron transfer chain that converts photonic excitation into a charge separation. This subunit is found at the monomer-monomer interface. The chain is Photosystem II reaction center protein M from Synechococcus sp. (strain RCC307).